Reading from the N-terminus, the 213-residue chain is Non-structural protein NP-1 (213 aa).

Residues 1 to 80 (MERSRSPRET…ATRKETATKK (80 aa)) form a disordered region. Basic and acidic residues-rich tracts occupy residues 15–33 (SRDKSDADWSERRREERTR) and 43–58 (AHGERSWGSWRSREKN).

It belongs to the Bocaparvovirus Non-structural protein NP-1 family.

The protein resides in the host nucleus. Functionally, required for the expression of the capsid proteins. Performs the splicing and internal polyadenylation of the viral capsid-encoding mRNA precursor, which allows its maturation and expression. Transactivates the viral promoter. The sequence is that of Non-structural protein NP-1 (NP1) from Bos taurus (Bovine).